The primary structure comprises 132 residues: 3-aminoacrylate deaminase RutC (132 aa).

The protein belongs to the RutC family.

The enzyme catalyses (Z)-3-aminoacrylate + H2O + H(+) = 3-oxopropanoate + NH4(+). Involved in pyrimidine catabolism. Catalyzes the deamination of 3-aminoacrylate to malonic semialdehyde, a reaction that can also occur spontaneously. RutC may facilitate the reaction and modulate the metabolic fitness, rather than catalyzing essential functions. This Cronobacter turicensis (strain DSM 18703 / CCUG 55852 / LMG 23827 / z3032) protein is 3-aminoacrylate deaminase RutC.